A 941-amino-acid chain; its full sequence is Endoglucanase (941 aa).

Positions 1–29 (MKIKQIKQSLSLLLIITLIMSLFVPMASA) are cleaved as a signal peptide. SLH domains follow at residues 37-94 (NAFP…GLEA), 95-158 (SSKD…LSLP), and 161-224 (QREY…DYLY). Catalysis depends on Glu373, which acts as the Proton donor. Glu485 acts as the Nucleophile in catalysis.

The protein belongs to the glycosyl hydrolase 5 (cellulase A) family.

It catalyses the reaction Endohydrolysis of (1-&gt;4)-beta-D-glucosidic linkages in cellulose, lichenin and cereal beta-D-glucans.. The polypeptide is Endoglucanase (Bacillus sp. (strain KSM-635)).